The primary structure comprises 254 residues: Probable phosphoglycerate mutase 4 (254 aa).

Substrate is bound by residues 10-17 (RHGESTWN) and 23-24 (SC). The Tele-phosphohistidine intermediate role is filled by His11. Ser14 and Ser23 each carry phosphoserine. Tyr26 carries the phosphotyrosine modification. Phosphoserine is present on Ser31. Substrate-binding positions include Arg62, 89–92 (ERHY), and Lys100. Glu89 functions as the Proton donor/acceptor in the catalytic mechanism. Lys106 carries the post-translational modification N6-acetyllysine. Position 116–117 (116–117 (RR)) interacts with substrate. At Ser118 the chain carries Phosphoserine. 187–188 (GN) serves as a coordination point for substrate. Residue Lys251 is modified to N6-acetyllysine; alternate. Residue Lys251 is modified to N6-succinyllysine; alternate. 2 positions are modified to N6-acetyllysine: Lys253 and Lys254.

It belongs to the phosphoglycerate mutase family. BPG-dependent PGAM subfamily.

The enzyme catalyses (2R)-2-phosphoglycerate = (2R)-3-phosphoglycerate. The catalysed reaction is (2R)-3-phospho-glyceroyl phosphate = (2R)-2,3-bisphosphoglycerate + H(+). The sequence is that of Probable phosphoglycerate mutase 4 (PGAM4) from Pan troglodytes (Chimpanzee).